The sequence spans 418 residues: MSDITVTNWAGNITYTAKELLRPHSLDALRALVADSARVRVLGSGHSFNEIAEPGDGGVLLSLAGLPSVVDVDTAARTVRVGGGVRYAELARVVHARGLALPNMASLPHISVAGSVATGTHGSGVGNGSLASVVREVELVTADGSTVVIARGDERFGGAVTSLGALGVVTSLTLDLEPAYEMEQHVFTELPLAGLDPATFETVMAAAYSVSLFTDWRAPGFRQVWLKRRTDRPLDGFPYAAPAAEKMHPVPGMPAVNCTEQFGVPGPWHERLPHFRAEFTPSSGAELQSEYLMPREHALAALHAMDAIRETLAPVLQTCEIRTVAADAQWLSPAYGRDTVAAHFTWVEDTAAVLPVVRRLEEALVPFAARPHWGKVFTVPAGELRALYPRLADFGALAGALDPAGKFTNAFVRGVLAG.

Residues 13–179 (ITYTAKELLR…TSLTLDLEPA (167 aa)) form the FAD-binding PCMH-type domain. FAD is bound by residues 41–47 (VLGSGHS), serine 106, serine 111, glycine 114, 118–121 (TGTH), and valine 169. Histidine 46 bears the Pros-8alpha-FAD histidine mark. A D-sorbitol-binding site is contributed by serine 106. Serine 106 lines the xylitol pocket. D-sorbitol-binding residues include glutamate 320, arginine 322, and threonine 345. Xylitol-binding residues include glutamate 320, arginine 322, and threonine 345. Residue arginine 322 coordinates FAD. Position 372 (histidine 372) interacts with FAD. Lysine 375 contacts D-sorbitol. Residue lysine 375 coordinates xylitol.

Belongs to the oxygen-dependent FAD-linked oxidoreductase family. Monomer. FAD serves as cofactor.

It catalyses the reaction an alditol + O2 = an aldose + H2O2. It carries out the reaction xylitol + O2 = D-xylose + H2O2. The enzyme catalyses D-sorbitol + O2 = D-glucose + H2O2. Its function is as follows. Oxidase that performs selective oxidation of the terminal primary hydroxyl group of several alditols, with a reduction of O2 to H2O2. Shows highest activity on xylitol and D-sorbitol, and a poor efficiency with D-mannitol and L-threitol. The polypeptide is Alditol oxidase (xyoA) (Streptomyces coelicolor (strain ATCC BAA-471 / A3(2) / M145)).